The sequence spans 83 residues: Defensin-like protein 47 (83 aa).

The first 27 residues, 1–27 (MGSTKTLVTCFLVIILAVSLPNNNVLA), serve as a signal peptide directing secretion. 4 cysteine pairs are disulfide-bonded: cysteine 40-cysteine 81, cysteine 44-cysteine 68, cysteine 53-cysteine 79, and cysteine 57-cysteine 80.

This sequence belongs to the DEFL family.

The protein localises to the secreted. This is Defensin-like protein 47 from Arabidopsis thaliana (Mouse-ear cress).